The following is a 379-amino-acid chain: Reducing end xylose-releasing exo-oligoxylanase (379 aa).

E66 serves as the catalytic Proton donor. D259 (proton acceptor) is an active-site residue.

Belongs to the glycosyl hydrolase 8 (cellulase D) family.

It catalyses the reaction Hydrolysis of (1-&gt;4)-beta-D-xylose residues from the reducing end of oligosaccharides.. Functionally, hydrolyzes xylooligosaccharides with a degree of polymerization of greater than or equal to 3, releasing xylose from the reducing end. Has low activity on birchwood xylan, oat spelt xylan and arabinoxylan. This Bifidobacterium adolescentis (strain ATCC 15703 / DSM 20083 / NCTC 11814 / E194a) protein is Reducing end xylose-releasing exo-oligoxylanase.